The chain runs to 550 residues: Epidermal growth factor-like protein 6 (550 aa).

Positions 1 to 18 (MQPPWGLALPLLLPWVTG) are cleaved as a signal peptide. The 36-residue stretch at 55–90 (NKGVCEAMCEPRCKFGECVGPNKCRCFPGYTGKTCT) folds into the EGF-like 1 domain. 6 cysteine pairs are disulfide-bonded: cysteine 59/cysteine 72, cysteine 63/cysteine 78, cysteine 80/cysteine 89, cysteine 96/cysteine 107, cysteine 103/cysteine 116, and cysteine 118/cysteine 130. Residues 92–131 (DVNECGVKPRPCQHRCVNTHGSYKCFCLSGHMLLPDATCS) form the EGF-like 2; calcium-binding domain. The EGF-like 3 domain maps to 135–171 (TCARLNCQYGCEDTEEGPRCVCPSSGLRLGPNGRVCL). Residues 172-210 (DIDECASSKAVCPSNRRCVNTFGSYYCKCHIGFELKYIG) form the EGF-like 4; calcium-binding domain. 5 cysteine pairs are disulfide-bonded: cysteine 176–cysteine 189, cysteine 183–cysteine 198, cysteine 221–cysteine 234, cysteine 228–cysteine 243, and cysteine 245–cysteine 256. The EGF-like 5; calcium-binding domain occupies 217–257 (DINECALNTHPCSPHANCLNTRGSFKCKCKQGYRGNGLQCS). Positions 295–354 (KMVTPRPASTRVPKVNLPYSSEEGVSRGRNYDGEQKKKEEGKRERLEEEKGEKTLRNEVE) are disordered. A compositionally biased stretch (basic and acidic residues) spans 318 to 354 (GVSRGRNYDGEQKKKEEGKRERLEEEKGEKTLRNEVE). The stretch at 327 to 357 (GEQKKKEEGKRERLEEEKGEKTLRNEVEQER) forms a coiled coil. N-linked (GlcNAc...) asparagine glycosylation occurs at asparagine 394. Residues 397–543 (VDCSFDLGVC…VLLVSGLCPD (147 aa)) enclose the MAM domain.

This sequence belongs to the nephronectin family. In terms of tissue distribution, expressed at basement membrane of pelage follicles (at protein level).

It is found in the secreted. It localises to the extracellular space. The protein localises to the extracellular matrix. Its subcellular location is the basement membrane. May bind integrin alpha-8/beta-1 and play a role in hair follicle morphogenesis. Promotes matrix assembly. The polypeptide is Epidermal growth factor-like protein 6 (Egfl6) (Mus musculus (Mouse)).